Here is a 611-residue protein sequence, read N- to C-terminus: Putative pentatricopeptide repeat-containing protein At1g56570 (611 aa).

13 PPR repeats span residues 44-74 (HHILATNLIVSYFEKGLVEEARSLFDEMPDR), 75-109 (DVVAWTAMITGYASSNYNARAWECFHEMVKQGTSP), 110-144 (NEFTLSSVLKSCRNMKVLAYGALVHGVVVKLGMEG), 145-176 (SLYVDNAMMNMYATCSVTMEAACLIFRDIKVK), 177-211 (NDVTWTTLITGFTHLGDGIGGLKMYKQMLLENAEV), 212-246 (TPYCITIAVRASASIDSVTTGKQIHASVIKRGFQS), 247-281 (NLPVMNSILDLYCRCGYLSEAKHYFHEMEDKDLIT), 282-311 (WNTLISELERSDSSEALLMFQRFESQGFVP), 312-346 (NCYTFTSLVAACANIAALNCGQQLHGRIFRRGFNK), 347-377 (NVELANALIDMYAKCGNIPDSQRVFGEIVDR), 379-413 (NLVSWTSMMIGYGSHGYGAEAVELFDKMVSSGIRP), 414-444 (DRIVFMAVLSACRHAGLVEKGLKYFNVMESE), and 450-480 (DRDIYNCVVDLLGRAGKIGEAYELVERMPFK). The type E motif stretch occupies residues 485–561 (TWGAILGACK…EAGMSWILVE (77 aa)). The interval 562-592 (NQVFSFAVSDKMCPNASSVYSVLGLLIEETR) is type E(+) motif.

The protein belongs to the PPR family. PCMP-E subfamily.

The sequence is that of Putative pentatricopeptide repeat-containing protein At1g56570 (PCMP-E64) from Arabidopsis thaliana (Mouse-ear cress).